A 283-amino-acid chain; its full sequence is ATP phosphoribosyltransferase (283 aa).

This sequence belongs to the ATP phosphoribosyltransferase family. Long subfamily. The cofactor is Mg(2+).

It is found in the cytoplasm. The catalysed reaction is 1-(5-phospho-beta-D-ribosyl)-ATP + diphosphate = 5-phospho-alpha-D-ribose 1-diphosphate + ATP. Its pathway is amino-acid biosynthesis; L-histidine biosynthesis; L-histidine from 5-phospho-alpha-D-ribose 1-diphosphate: step 1/9. Feedback inhibited by histidine. Its function is as follows. Catalyzes the condensation of ATP and 5-phosphoribose 1-diphosphate to form N'-(5'-phosphoribosyl)-ATP (PR-ATP). Has a crucial role in the pathway because the rate of histidine biosynthesis seems to be controlled primarily by regulation of HisG enzymatic activity. This chain is ATP phosphoribosyltransferase, found in Ignicoccus hospitalis (strain KIN4/I / DSM 18386 / JCM 14125).